A 71-amino-acid polypeptide reads, in one-letter code: Cytotoxic linear peptide IsCT2 (71 aa).

The N-terminal stretch at 1–23 (MKTQFAILLVALVLFQMFAQSEA) is a signal peptide. Phenylalanine 36 is modified (phenylalanine amide). Residues 40-71 (ALNNDLDLDGLDELFDGEISQADVDFLKELMR) constitute a propeptide that is removed on maturation.

The protein belongs to the non-disulfide-bridged peptide (NDBP) superfamily. Short antimicrobial peptide (group 4) family. In terms of processing, isCT2F is an enzymatic proteolytic cleavage product of IsCT2 by the proteases present in the venom. In terms of tissue distribution, expressed by the venom gland.

It is found in the secreted. The protein localises to the target cell membrane. IsCT2 shows weak hemolytic activity and antibacterial activity against both Gram-positive and Gram-negative bacteria probably by forming pores in the cell membrane. IsCT2 adopts an amphipathic alpha-helical structure. In terms of biological role, isCT2f shows neither hemolytic, nor antibacterial activities, surely due to the fact that it cannot apply amphipathic alpha-helical structure. This is Cytotoxic linear peptide IsCT2 from Opisthacanthus madagascariensis (Scorpion).